The sequence spans 522 residues: Protein tweety homolog 3 (522 aa).

Topologically, residues 1–43 (MAAAISYTPPWWVNLLHRLPHLNLQWESLNGDFRPEDPDYQQS) are extracellular. Residues 44–64 (LMLLACVALSCLALDLLFLLF) form a helical membrane-spanning segment. Over 65 to 87 (YSFWFCCRHRKTEENTNADCCCT) the chain is Cytoplasmic. A helical transmembrane segment spans residues 88–108 (VWCVIVATLVCSAGIAVGFYG). Residues 109–211 (NGETSDGIHR…VDLFDWYRWL (103 aa)) are Extracellular-facing. Residues glutamate 111 and aspartate 114 each contribute to the Ca(2+) site. Asparagine 127 and asparagine 145 each carry an N-linked (GlcNAc...) asparagine glycan. The chain crosses the membrane as a helical span at residues 212–232 (GYLGLLLFHVFICLLVLFGLI). Over 233-238 (RNSKGT) the chain is Cytoplasmic. The helical transmembrane segment at 239–259 (LICVCFLGMMALIISWASMGL) threads the bilayer. Residues 260 to 386 (ELAVAVGSSD…LTGFCYDGVE (127 aa)) are Extracellular-facing. 2 disulfides stabilise this stretch: cysteine 271–cysteine 381 and cysteine 299–cysteine 366. N-linked (GlcNAc...) asparagine glycosylation occurs at asparagine 351. A helical membrane pass occupies residues 387 to 407 (GLIYLVLFSFVTALMFSSIVC). The Cytoplasmic segment spans residues 408–522 (SVPHTWQQRR…TNRPETDPVH (115 aa)). The interval 483–522 (QNPRCENTPLIGRESPPPSYTSSMRAKYLATNRPETDPVH) is disordered.

Belongs to the tweety family. In terms of assembly, homotetramer; disulfide-linked. Forms cis-homodimers in the presence of Ca(2+).

It is found in the cell membrane. It carries out the reaction chloride(in) = chloride(out). The catalysed reaction is L-glutamate(out) = L-glutamate(in). Functionally, may act as a calcium-independent, swelling-dependent volume-regulated anion channel (VRAC-swell) which plays a pivotal role in the process of regulatory volume decrease (RVD) in the brain through the efflux of anions like chloride and organic osmolytes like glutamate. Probable large-conductance Ca(2+)-activated chloride channel. This Xenopus laevis (African clawed frog) protein is Protein tweety homolog 3 (ttyh3).